A 216-amino-acid polypeptide reads, in one-letter code: Holliday junction branch migration complex subunit RuvA (216 aa).

Residues Met1 to Lys64 form a domain I region. The segment at Ser65–Thr143 is domain II. Residues Ser144–Val163 are flexible linker. The domain III stretch occupies residues Leu164–Arg216.

The protein belongs to the RuvA family. Homotetramer. Forms an RuvA(8)-RuvB(12)-Holliday junction (HJ) complex. HJ DNA is sandwiched between 2 RuvA tetramers; dsDNA enters through RuvA and exits via RuvB. An RuvB hexamer assembles on each DNA strand where it exits the tetramer. Each RuvB hexamer is contacted by two RuvA subunits (via domain III) on 2 adjacent RuvB subunits; this complex drives branch migration. In the full resolvosome a probable DNA-RuvA(4)-RuvB(12)-RuvC(2) complex forms which resolves the HJ.

The protein resides in the cytoplasm. Functionally, the RuvA-RuvB-RuvC complex processes Holliday junction (HJ) DNA during genetic recombination and DNA repair, while the RuvA-RuvB complex plays an important role in the rescue of blocked DNA replication forks via replication fork reversal (RFR). RuvA specifically binds to HJ cruciform DNA, conferring on it an open structure. The RuvB hexamer acts as an ATP-dependent pump, pulling dsDNA into and through the RuvAB complex. HJ branch migration allows RuvC to scan DNA until it finds its consensus sequence, where it cleaves and resolves the cruciform DNA. This is Holliday junction branch migration complex subunit RuvA from Francisella tularensis subsp. mediasiatica (strain FSC147).